The sequence spans 376 residues: uncharacterized protein (376 aa).

At S59 the chain carries Phosphoserine. The 229-residue stretch at 139 to 367 (VAIEITVQRQ…CLIEHHNAIF (229 aa)) folds into the Rho-GAP domain. The disordered stretch occupies residues 307-338 (RPSRSPKKSNDFETATPWDLLSDEGEGPDASS).

This is an uncharacterized protein from Arabidopsis thaliana (Mouse-ear cress).